The chain runs to 176 residues: Large ribosomal subunit protein uL6 (176 aa).

It belongs to the universal ribosomal protein uL6 family. Part of the 50S ribosomal subunit.

This protein binds to the 23S rRNA, and is important in its secondary structure. It is located near the subunit interface in the base of the L7/L12 stalk, and near the tRNA binding site of the peptidyltransferase center. The chain is Large ribosomal subunit protein uL6 from Burkholderia vietnamiensis (strain G4 / LMG 22486) (Burkholderia cepacia (strain R1808)).